A 160-amino-acid chain; its full sequence is Phosphopantetheine adenylyltransferase (160 aa).

Thr11 contributes to the substrate binding site. ATP-binding positions include 11-12 and His19; that span reads TF. Residues Lys43, Leu75, and Arg89 each coordinate substrate. Residues 90–92, Glu100, and 125–131 each bind ATP; these read GLR and HMFVSAS.

Belongs to the bacterial CoaD family. As to quaternary structure, homohexamer. The cofactor is Mg(2+).

It is found in the cytoplasm. It carries out the reaction (R)-4'-phosphopantetheine + ATP + H(+) = 3'-dephospho-CoA + diphosphate. It participates in cofactor biosynthesis; coenzyme A biosynthesis; CoA from (R)-pantothenate: step 4/5. Its function is as follows. Reversibly transfers an adenylyl group from ATP to 4'-phosphopantetheine, yielding dephospho-CoA (dPCoA) and pyrophosphate. The chain is Phosphopantetheine adenylyltransferase from Methylobacillus flagellatus (strain ATCC 51484 / DSM 6875 / VKM B-1610 / KT).